An 857-amino-acid chain; its full sequence is RNA-directed RNA polymerase 2a (857 aa).

The RdRp catalytic domain occupies 511 to 624 (KHCLEIDLSK…FSVLPPVGDP (114 aa)). The segment at 772-857 (TKQRKKKDGI…PCEHGGIIRI (86 aa)) is disordered. Basic and acidic residues predominate over residues 800 to 812 (EKTETKVSHEEST).

It belongs to the ssRNA positive-strand viruses RNA-directed RNA polymerase family. In terms of assembly, interacts with replication protein 1a.

It carries out the reaction RNA(n) + a ribonucleoside 5'-triphosphate = RNA(n+1) + diphosphate. RNA-dependent RNA polymerase which replicates the viral genome composed of 3 RNA segments, RNA1, RNA2 and RNA3. The sequence is that of RNA-directed RNA polymerase 2a from Cucumis sativus (Cucumber).